A 361-amino-acid chain; its full sequence is Probable galacturonosyltransferase-like 5 (361 aa).

At 1 to 6 the chain is on the cytoplasmic side; that stretch reads MHWITR. The chain crosses the membrane as a helical; Signal-anchor for type II membrane protein span at residues 7–27; the sequence is FSAFFSAALAMILLSPSLQSF. The Lumenal segment spans residues 28-361; that stretch reads SPAAAIRSSH…APYDLYKHSH (334 aa). Residues asparagine 218 and asparagine 234 are each glycosylated (N-linked (GlcNAc...) asparagine).

The protein belongs to the glycosyltransferase 8 family.

It is found in the golgi apparatus membrane. The protein operates within glycan metabolism; pectin biosynthesis. Its function is as follows. May be involved in pectin and/or xylans biosynthesis in cell walls. This chain is Probable galacturonosyltransferase-like 5 (GATL5), found in Arabidopsis thaliana (Mouse-ear cress).